A 416-amino-acid chain; its full sequence is Probable F-box protein At5g47300 (416 aa).

The 47-residue stretch at 40–86 (TLMLSDLPGDLLEEILCRVPATSLKQLRSTCKQWNNLFNNGRFTRKH) folds into the F-box domain.

The sequence is that of Probable F-box protein At5g47300 from Arabidopsis thaliana (Mouse-ear cress).